Reading from the N-terminus, the 391-residue chain is Ferrochelatase (391 aa).

The Fe cation site is built by His196 and Glu281.

This sequence belongs to the ferrochelatase family.

The protein resides in the cytoplasm. The enzyme catalyses heme b + 2 H(+) = protoporphyrin IX + Fe(2+). The protein operates within porphyrin-containing compound metabolism; protoheme biosynthesis; protoheme from protoporphyrin-IX: step 1/1. Its function is as follows. Catalyzes the ferrous insertion into protoporphyrin IX. This chain is Ferrochelatase, found in Synechococcus sp. (strain WH7803).